The primary structure comprises 157 residues: Putative pre-16S rRNA nuclease (157 aa).

It belongs to the YqgF nuclease family.

The protein localises to the cytoplasm. Its function is as follows. Could be a nuclease involved in processing of the 5'-end of pre-16S rRNA. The protein is Putative pre-16S rRNA nuclease of Anaplasma marginale (strain St. Maries).